A 555-amino-acid chain; its full sequence is Heterochromatin protein 1-binding protein 3 (555 aa).

Ala2 bears the N-acetylalanine mark. Ser6 is subject to Phosphoserine. The tract at residues Lys29–Pro134 is disordered. Thr51 bears the Phosphothreonine mark. Basic and acidic residues predominate over residues Thr51–Pro67. Lys64 participates in a covalent cross-link: Glycyl lysine isopeptide (Lys-Gly) (interchain with G-Cter in SUMO2). Residue Thr85 is modified to Phosphothreonine. Lys97 participates in a covalent cross-link: Glycyl lysine isopeptide (Lys-Gly) (interchain with G-Cter in SUMO2). Positions Pro100–Lys127 are enriched in basic and acidic residues. A phosphoserine mark is found at Ser142, Ser155, and Ser156. Positions Pro157–Gln232 constitute an H15 1 domain. Lys190 carries the N6-acetyllysine modification. Positions Ser227 to Glu254 are disordered. Positions Lys233 to Arg247 are enriched in basic residues. Phosphoserine occurs at positions 248 and 249. 2 consecutive H15 domains span residues Pro255–Lys330 and Leu337–Phe413. A Glycyl lysine isopeptide (Lys-Gly) (interchain with G-Cter in SUMO2) cross-link involves residue Lys258. The interval Leu422–Lys555 is disordered. A compositionally biased stretch (acidic residues) spans Asp430 to Glu452. A phosphoserine mark is found at Ser443, Ser444, and Ser448. The segment covering Gly491 to Arg512 has biased composition (basic residues). The segment covering Pro513–Ser532 has biased composition (low complexity). A compositionally biased stretch (basic residues) spans Ser545–Lys555.

Interacts (via PxVxL motif) with CBX5.

It is found in the nucleus. Its subcellular location is the chromosome. Component of heterochromatin that maintains heterochromatin integrity during G1/S progression and regulates the duration of G1 phase to critically influence cell proliferative capacity. May play a role in hypoxia-induced oncogenesis. This chain is Heterochromatin protein 1-binding protein 3 (HP1BP3), found in Bos taurus (Bovine).